The chain runs to 167 residues: MNTKITNFTFDKKNLNLAEEIIKKYPPHGKRSAILPLLDLAQRQNGGWLPVPAIEYVANMLAMPYIRAYEVATFYTMFNLKRVGKYHIQVCTTTPCWLRGSDDIMKICEKKLGVKLKETTEDQKFTLSEIECLGACVNAPVVQINDDYYEDLTQDKMGKIIDKLQND.

Cys91, Cys96, Cys132, and Cys136 together coordinate [2Fe-2S] cluster.

Belongs to the complex I 24 kDa subunit family. The cofactor is [2Fe-2S] cluster.

The enzyme catalyses a quinone + NADH + 5 H(+)(in) = a quinol + NAD(+) + 4 H(+)(out). In terms of biological role, NDH-1 shuttles electrons from NADH, via FMN and iron-sulfur (Fe-S) centers, to quinones in the respiratory chain. Couples the redox reaction to proton translocation (for every two electrons transferred, four hydrogen ions are translocated across the cytoplasmic membrane), and thus conserves the redox energy in a proton gradient. This is NADH-quinone oxidoreductase subunit E (nuoE) from Rickettsia conorii (strain ATCC VR-613 / Malish 7).